Here is a 279-residue protein sequence, read N- to C-terminus: Oxygen-dependent coproporphyrinogen-III oxidase (279 aa).

Substrate is bound at residue S102. H106 and H116 together coordinate a divalent metal cation. H116 acts as the Proton donor in catalysis. 118–120 serves as a coordination point for substrate; the sequence is NTR. Positions 149 and 179 each coordinate a divalent metal cation. Residues 244–279 are important for dimerization; that stretch reads YVEFNLLYDRGTKFGLMTDGNVEAILMSLPPEVKFN.

The protein belongs to the aerobic coproporphyrinogen-III oxidase family. In terms of assembly, homodimer. A divalent metal cation serves as cofactor.

The protein resides in the cytoplasm. The enzyme catalyses coproporphyrinogen III + O2 + 2 H(+) = protoporphyrinogen IX + 2 CO2 + 2 H2O. The protein operates within porphyrin-containing compound metabolism; protoporphyrin-IX biosynthesis; protoporphyrinogen-IX from coproporphyrinogen-III (O2 route): step 1/1. Its function is as follows. Involved in the heme biosynthesis. Catalyzes the aerobic oxidative decarboxylation of propionate groups of rings A and B of coproporphyrinogen-III to yield the vinyl groups in protoporphyrinogen-IX. This Rickettsia felis (strain ATCC VR-1525 / URRWXCal2) (Rickettsia azadi) protein is Oxygen-dependent coproporphyrinogen-III oxidase.